The following is an 877-amino-acid chain: Putative ankyrin repeat protein R748 (877 aa).

6 ANK repeats span residues 44-74 (IRHICLTGSYNNNQMSIMKILMNKFPKTINV), 79-109 (QNNTYLHQSIFNRHKIFVDFFMNELNDNINY), 115-145 (IGISHLHALVNYGYIDHIETAIIKDPGAIQQ), 202-231 (MGYRAIECAVRYCSTDVIDELISLGFSINE), 243-272 (NNNDLIGFATQIDRLDMVKHLINIGAPIHM), and 282-311 (LVPTCLVVAIKFKRDQCIHYLLNLPESIQA). Residues 525 to 579 (DSDEDPVCDSNESDNSNDINNHVKSDNKLNSSNDYYDEDDSEDNYNNQSDDEPLV) form a disordered region. Residues 533–544 (DSNESDNSNDIN) show a composition bias toward low complexity.

This chain is Putative ankyrin repeat protein R748, found in Acanthamoeba polyphaga mimivirus (APMV).